Here is a 254-residue protein sequence, read N- to C-terminus: 3-oxo-5-alpha-steroid 4-dehydrogenase 2 (254 aa).

Helical transmembrane passes span 8 to 28 (SPVL…LYVA), 72 to 92 (PLSL…LHYF), 146 to 166 (FSLG…SDYI), and 206 to 226 (LATW…FLGL).

It belongs to the steroid 5-alpha reductase family. Expressed in high levels in the prostate and many other androgen-sensitive tissues.

It localises to the microsome membrane. The protein resides in the endoplasmic reticulum membrane. The catalysed reaction is a 3-oxo-5alpha-steroid + NADP(+) = a 3-oxo-Delta(4)-steroid + NADPH + H(+). It catalyses the reaction 17beta-hydroxy-5alpha-androstan-3-one + NADP(+) = testosterone + NADPH + H(+). It carries out the reaction 5alpha-pregnane-3,20-dione + NADP(+) = progesterone + NADPH + H(+). Functionally, converts testosterone (T) into 5-alpha-dihydrotestosterone (DHT) and progesterone or corticosterone into their corresponding 5-alpha-3-oxosteroids. It plays a central role in sexual differentiation and androgen physiology. The sequence is that of 3-oxo-5-alpha-steroid 4-dehydrogenase 2 (SRD5A2) from Homo sapiens (Human).